The chain runs to 396 residues: Phosphoglycerate kinase (396 aa).

Substrate contacts are provided by residues 21-23 (DIN), Arg36, 59-62 (HFGR), Arg118, and Arg151. ATP contacts are provided by residues Lys201, Glu323, and 353-356 (GGDT).

Belongs to the phosphoglycerate kinase family. In terms of assembly, monomer.

The protein resides in the cytoplasm. It catalyses the reaction (2R)-3-phosphoglycerate + ATP = (2R)-3-phospho-glyceroyl phosphate + ADP. It participates in carbohydrate degradation; glycolysis; pyruvate from D-glyceraldehyde 3-phosphate: step 2/5. The polypeptide is Phosphoglycerate kinase (Ruegeria sp. (strain TM1040) (Silicibacter sp.)).